The following is a 279-amino-acid chain: Tryptophan synthase alpha chain (279 aa).

Residues E50 and D61 each act as proton acceptor in the active site.

This sequence belongs to the TrpA family. As to quaternary structure, tetramer of two alpha and two beta chains.

The catalysed reaction is (1S,2R)-1-C-(indol-3-yl)glycerol 3-phosphate + L-serine = D-glyceraldehyde 3-phosphate + L-tryptophan + H2O. The protein operates within amino-acid biosynthesis; L-tryptophan biosynthesis; L-tryptophan from chorismate: step 5/5. In terms of biological role, the alpha subunit is responsible for the aldol cleavage of indoleglycerol phosphate to indole and glyceraldehyde 3-phosphate. In Rhizobium etli (strain ATCC 51251 / DSM 11541 / JCM 21823 / NBRC 15573 / CFN 42), this protein is Tryptophan synthase alpha chain.